The chain runs to 211 residues: Ras-related protein RABB1c (211 aa).

The residue at position 2 (serine 2) is an N-acetylserine. 13–21 is a binding site for GTP; sequence GDTGVGKSC. Residues 35 to 43 carry the Effector region motif; sequence HDLTIGVEF. Residues 61–65, 119–122, and 149–151 contribute to the GTP site; these read DTAGQ, NKCD, and SAK. S-geranylgeranyl cysteine attachment occurs at residues cysteine 209 and cysteine 210.

It belongs to the small GTPase superfamily. Rab family.

The protein localises to the cell membrane. Its function is as follows. Intracellular vesicle trafficking and protein transport. The chain is Ras-related protein RABB1c (RABB1C) from Arabidopsis thaliana (Mouse-ear cress).